A 317-amino-acid chain; its full sequence is NAD-dependent protein deacetylase Sirt6 (317 aa).

In terms of domain architecture, Deacetylase sirtuin-type spans 27–273; the sequence is DEVVAEKCQE…SKVCKLLGVE (247 aa). NAD(+) contacts are provided by Ala53, Thr57, Phe64, Arg65, Trp71, Gln113, and His133. Catalysis depends on His133, which acts as the Proton acceptor. 4 residues coordinate Zn(2+): Cys141, Cys144, Cys166, and Cys177. Gly215, Asn241, Gln243, and Val259 together coordinate NAD(+).

It belongs to the sirtuin family. Class IV subfamily. Zn(2+) serves as cofactor. Widely expressed.

It is found in the nucleus. Its subcellular location is the chromosome. The enzyme catalyses N(6)-acetyl-L-lysyl-[protein] + NAD(+) + H2O = 2''-O-acetyl-ADP-D-ribose + nicotinamide + L-lysyl-[protein]. In terms of biological role, NAD-dependent histone deacylase that acts as a regulator of life span. The sequence is that of NAD-dependent protein deacetylase Sirt6 from Drosophila melanogaster (Fruit fly).